The following is a 287-amino-acid chain: 2-dehydro-3-deoxyphosphooctonate aldolase (287 aa).

It belongs to the KdsA family.

The protein resides in the cytoplasm. The catalysed reaction is D-arabinose 5-phosphate + phosphoenolpyruvate + H2O = 3-deoxy-alpha-D-manno-2-octulosonate-8-phosphate + phosphate. It participates in carbohydrate biosynthesis; 3-deoxy-D-manno-octulosonate biosynthesis; 3-deoxy-D-manno-octulosonate from D-ribulose 5-phosphate: step 2/3. It functions in the pathway bacterial outer membrane biogenesis; lipopolysaccharide biosynthesis. The sequence is that of 2-dehydro-3-deoxyphosphooctonate aldolase from Rhodopseudomonas palustris (strain TIE-1).